The sequence spans 198 residues: Nucleoid occlusion factor SlmA (198 aa).

The 62-residue stretch at 9–70 (RNRREEILQA…SLIEFIEDTL (62 aa)) folds into the HTH tetR-type domain. Residues 33 to 52 (TTAKLAANVGVSEAALYRHF) constitute a DNA-binding region (H-T-H motif). Positions 117 to 144 (EQDRLQGRINQLFERIEAQLRQVLKERR) form a coiled coil.

The protein belongs to the nucleoid occlusion factor SlmA family. Homodimer. Interacts with FtsZ.

It is found in the cytoplasm. The protein localises to the nucleoid. Required for nucleoid occlusion (NO) phenomenon, which prevents Z-ring formation and cell division over the nucleoid. Acts as a DNA-associated cell division inhibitor that binds simultaneously chromosomal DNA and FtsZ, and disrupts the assembly of FtsZ polymers. SlmA-DNA-binding sequences (SBS) are dispersed on non-Ter regions of the chromosome, preventing FtsZ polymerization at these regions. The polypeptide is Nucleoid occlusion factor SlmA (Edwardsiella ictaluri (strain 93-146)).